We begin with the raw amino-acid sequence, 192 residues long: Orotate phosphoribosyltransferase (192 aa).

116–124 (EDIVTTGLS) provides a ligand contact to 5-phospho-alpha-D-ribose 1-diphosphate. Orotate-binding residues include threonine 120 and arginine 148.

It belongs to the purine/pyrimidine phosphoribosyltransferase family. PyrE subfamily. Homodimer. Mg(2+) serves as cofactor.

The catalysed reaction is orotidine 5'-phosphate + diphosphate = orotate + 5-phospho-alpha-D-ribose 1-diphosphate. Its pathway is pyrimidine metabolism; UMP biosynthesis via de novo pathway; UMP from orotate: step 1/2. Functionally, catalyzes the transfer of a ribosyl phosphate group from 5-phosphoribose 1-diphosphate to orotate, leading to the formation of orotidine monophosphate (OMP). This is Orotate phosphoribosyltransferase from Bartonella tribocorum (strain CIP 105476 / IBS 506).